A 646-amino-acid polypeptide reads, in one-letter code: MKLHKKKLTLFAFFILTVLTVTLKTYFSYYVDFSLGVKGLVQNLILLMNPYSLIALVLSIFLFFKGKKAFWFIFIGGFILTFLLYANVVYFRFFSDFLTFSTLNQAGNVESMGGAVTASFKWYDFVYFIDTIIYLFVLIFKQKWLDKRVFSKKFVPVVMAASIALFFLNLAFAESDRPELLTRTFDHKYLVKYLGPYNFTVYDGVKTIQNNQQKALANEDDLTKVLNYTKQKQTEPNKEYFGAAKKKNIIKIHLESFQTFLINKKVNGEEVTPFLNKLSTGNEGYRYYPNFYHQTGQGKTSDSEFTMDNSLFGLPQGSAYSLKGDNTYQSLPAILDQQQGYTSSVMHGDYKTFWNRDQVYKHFGIDKFYDATYYDMSEDNIENLGLKDKEFFKESADYLAKEKQPFYNHLITLTNHYPFTVSPEDASIEKPNTGDSTVDGYIQTARYLDESLEEFVNELKKKGLYDDSVIMIYGDHYGISENHNKAMEKLLGEDITPAKFNDLNRTGFWLKIPGKEGTVDKTYAGQADVMPTILHLMGIDTKNYLMMGTDLLSKDHNDTVPFRNGDFVTKDYKYVNGRIYDNKNNEPMTEKPKDFEKRKQQSEKDLQMSDDVLNGDLLRFYDNPDFDKIKPSEYEYKTGPKGQERK.

The Cytoplasmic portion of the chain corresponds to Met1–Lys7. Residues Leu8–Ser28 form a helical membrane-spanning segment. Residues Tyr29 to Asn43 lie on the Extracellular side of the membrane. A helical transmembrane segment spans residues Leu44–Phe64. At Lys65–Lys68 the chain is on the cytoplasmic side. The helical transmembrane segment at Ala69–Val89 threads the bilayer. Topologically, residues Tyr90–Ser119 are extracellular. A helical membrane pass occupies residues Phe120–Phe140. The Cytoplasmic portion of the chain corresponds to Lys141–Lys153. The chain crosses the membrane as a helical span at residues Phe154–Glu174. Residues Ser175–Lys646 lie on the Extracellular side of the membrane. The Mn(2+) site is built by Glu255 and Thr300. Thr300 is an active-site residue. His416 is a substrate binding site. 2 residues coordinate Mn(2+): Asp475 and His476. Positions Ile579 to Lys646 are disordered. Basic and acidic residues-rich tracts occupy residues Tyr580–Gln607 and Asp625–Lys646.

This sequence belongs to the LTA synthase family. Proteolytically cleaved.

It is found in the cell membrane. Its subcellular location is the secreted. The protein operates within cell wall biogenesis; lipoteichoic acid biosynthesis. Its function is as follows. Catalyzes the polymerization of lipoteichoic acid (LTA) polyglycerol phosphate, a reaction that presumably uses phosphatidylglycerol (PG) as substrate. Is required for staphylococcal growth and cell division process. This chain is Lipoteichoic acid synthase (ltaS), found in Staphylococcus saprophyticus subsp. saprophyticus (strain ATCC 15305 / DSM 20229 / NCIMB 8711 / NCTC 7292 / S-41).